Reading from the N-terminus, the 339-residue chain is Phenylalanine--tRNA ligase alpha subunit (339 aa).

Glu-254 is a Mg(2+) binding site.

This sequence belongs to the class-II aminoacyl-tRNA synthetase family. Phe-tRNA synthetase alpha subunit type 1 subfamily. Tetramer of two alpha and two beta subunits. The cofactor is Mg(2+).

The protein resides in the cytoplasm. The enzyme catalyses tRNA(Phe) + L-phenylalanine + ATP = L-phenylalanyl-tRNA(Phe) + AMP + diphosphate + H(+). The sequence is that of Phenylalanine--tRNA ligase alpha subunit from Clostridium botulinum (strain 657 / Type Ba4).